A 503-amino-acid chain; its full sequence is MRYDVVIAGAGPTGLMLACELRLAGARTLVLERLAERVDFSKALGVHARTVELLDMRGLGRGFQAEAPKLRGGNFASLGVPLDFSSFDTRHPYALFVPQVRTETLLTGRALELGAELRRGHAVTALEQDADGVTVSVTGPEGPYEVECAYLVGCDGGGITVRKLLGIDFPGQDPHMFAVIADARFREELPHGEGMGPMRPYGVMRHDLRAWFAAFPLEPDVYRATVAFFDRPYADRRAPVTEEDVRAALTEVAGSDFGMHDVRWLSRLTDTSRQAERYRDGRVLLAGDACHIHLPAGGQGLNLGFQDAVNLGWKLGATIAGTAPPELLDTYEAERRPIAAGVLRNTRAQAVLIDPDPRYEGLRELMIELLHVPETNRYLAGLISALDVRYPMAGEHPLLGRRVPDLPLVTEDGTRQLSTYFHAARGVLLTLGCDQPLADEAAAWKDRVDLVAAEGVADPGSAVDGLTALLVRPDGYICWTAAPETGTDGLTDALRTWFGPPAM.

It belongs to the PheA/TfdB FAD monooxygenase family. FAD serves as cofactor.

The enzyme catalyses anhydrotetracycline + NADPH + O2 + H(+) = 5a,11a-dehydrotetracycline + NADP(+) + H2O. It participates in antibiotic biosynthesis; oxytetracycline biosynthesis. Catalyzes hydroxylation of the anthracycline structure at position C-6 during the biosynthesis of oxytetracyline. The chain is Anhydrotetracycline monooxygenase from Streptomyces rimosus.